Reading from the N-terminus, the 124-residue chain is Acidic phospholipase A2 BA2 (124 aa).

7 disulfide bridges follow: C26-C116, C28-C44, C43-C95, C49-C124, C50-C88, C57-C81, and C75-C86. Ca(2+)-binding residues include Y27, G29, and G31. The active site involves H47. D48 lines the Ca(2+) pocket. D89 is an active-site residue.

This sequence belongs to the phospholipase A2 family. Group II subfamily. D49 sub-subfamily. The cofactor is Ca(2+). As to expression, expressed by the venom gland.

It localises to the secreted. It carries out the reaction a 1,2-diacyl-sn-glycero-3-phosphocholine + H2O = a 1-acyl-sn-glycero-3-phosphocholine + a fatty acid + H(+). PLA2 catalyzes the calcium-dependent hydrolysis of the 2-acyl groups in 3-sn-phosphoglycerides. The sequence is that of Acidic phospholipase A2 BA2 from Gloydius halys (Chinese water mocassin).